A 113-amino-acid polypeptide reads, in one-letter code: Urotensin-2B (113 aa).

The first 27 residues, Met-1 to Gly-27, serve as a signal peptide directing secretion. Positions Arg-28–Lys-103 are excised as a propeptide. A disulfide bridge connects residues Cys-107 and Cys-112.

The protein belongs to the urotensin-2 family.

The protein localises to the secreted. Potent vasoconstrictor. This is Urotensin-2B (Uts2b) from Mus musculus (Mouse).